A 260-amino-acid polypeptide reads, in one-letter code: uncharacterized protein (260 aa).

Positions 1–22 (MGYLKRFALYISILVLIVMVAG) are cleaved as a signal peptide. A lipid anchor (N-palmitoyl cysteine) is attached at Cys-23. Cys-23 carries the S-diacylglycerol cysteine lipid modification.

Belongs to the staphylococcal tandem lipoprotein family.

Its subcellular location is the cell membrane. This is an uncharacterized protein from Staphylococcus aureus (strain bovine RF122 / ET3-1).